The sequence spans 388 residues: MKTNNHNAKQAQTKTAKSNPSKEVTKIKPKRVKNKPTAKAAKSTGLKTNAANESSDVEVIKTAKSGLHERNAHRGRYDFKKLIAAEPQLKSFVIKNPKGEDSINFSDPKAVKMLNKALLAAHYDIEYWDIPDTYLCPPIPGRADYVHRVAELLDGEVKGKYAHHKVRALDVGVGANCIYPIVGVTQYGWHYTGSDVDPKSIESARTIVERNVSLNGKIELRQQTSESNIYRGIIQPNDRYDITTCNPPFHRSAEEAAMGSQRKLDNLKANQRKKGVKVQAHQAKTPQVKANKPALNFGGQNAELWCEGGEAAFIRKMANESQAFSAQVLWFTTLISKKDNVRPMRKQLEKLGVKAIRIVEMSQGQKVSRFMAWSYMDKAQRKAWIELK.

Residues 1–22 show a composition bias toward polar residues; it reads MKTNNHNAKQAQTKTAKSNPSK. Positions 1–51 are disordered; it reads MKTNNHNAKQAQTKTAKSNPSKEVTKIKPKRVKNKPTAKAAKSTGLKTNAA. The span at 27 to 36 shows a compositional bias: basic residues; it reads IKPKRVKNKP.

The protein belongs to the methyltransferase superfamily. METTL16/RlmF family.

The protein resides in the cytoplasm. It catalyses the reaction adenosine(1618) in 23S rRNA + S-adenosyl-L-methionine = N(6)-methyladenosine(1618) in 23S rRNA + S-adenosyl-L-homocysteine + H(+). Functionally, specifically methylates the adenine in position 1618 of 23S rRNA. The chain is Ribosomal RNA large subunit methyltransferase F from Vibrio campbellii (strain ATCC BAA-1116).